The sequence spans 442 residues: Protein UNUSUAL FLORAL ORGANS (442 aa).

The segment at M1 to T85 is interaction with SKP1A. The region spanning G44–Y90 is the F-box domain.

As to quaternary structure, part of a putative SCF (ASK/Cullin/F-box) ubiquitin ligase complex. Interacts with SKP1A/ASK1, SKP1B/ASK2 and ASK11.

It localises to the nucleus. It participates in protein modification; protein ubiquitination. In terms of biological role, component of SCF(ASK-cullin-F-box) E3 ubiquitin ligase complexes, which may mediate the ubiquitination and subsequent proteasomal degradation of target proteins. Considered as a meristem identity factor required for normal growth of the young floral meristem. Acts together with LEAFY to positively regulate the B class floral homeotic genes APETALA3 and PISTILLATA. In this way, operates as a region-specific regulator for petal and stamen development. Alternatively, may play a role as a negative regulator of the C class floral homeotic genes. Interacts together with the SKP1-like protein ASK1 to form a ubiquitin E3 ligase complex and could indirectly promote the ubiquitination and degradation of specific proteins controlling the floral primordia development like repressors of B class floral homeotic genes. The chain is Protein UNUSUAL FLORAL ORGANS (UFO) from Arabidopsis thaliana (Mouse-ear cress).